A 637-amino-acid polypeptide reads, in one-letter code: Chaperone protein HtpG (637 aa).

The segment at 1-347 is a; substrate-binding; that stretch reads MTQSVHAETH…SNDLPLNVSR (347 aa). The tract at residues 348–564 is b; that stretch reads EILQDNKVTV…NHGMSTQMIK (217 aa). The interval 565-637 is c; sequence LMRAAGQPVP…SRINRLLLQA (73 aa).

Belongs to the heat shock protein 90 family. In terms of assembly, homodimer.

The protein resides in the cytoplasm. In terms of biological role, molecular chaperone. Has ATPase activity. This Aeromonas salmonicida (strain A449) protein is Chaperone protein HtpG.